Consider the following 365-residue polypeptide: Aminomethyltransferase (365 aa).

It belongs to the GcvT family. As to quaternary structure, the glycine cleavage system is composed of four proteins: P, T, L and H.

It carries out the reaction N(6)-[(R)-S(8)-aminomethyldihydrolipoyl]-L-lysyl-[protein] + (6S)-5,6,7,8-tetrahydrofolate = N(6)-[(R)-dihydrolipoyl]-L-lysyl-[protein] + (6R)-5,10-methylene-5,6,7,8-tetrahydrofolate + NH4(+). The glycine cleavage system catalyzes the degradation of glycine. The protein is Aminomethyltransferase of Desulfitobacterium hafniense (strain DSM 10664 / DCB-2).